The sequence spans 320 residues: tRNA N6-adenosine threonylcarbamoyltransferase (320 aa).

The Fe cation site is built by histidine 114 and histidine 118. Residues valine 136–glycine 140, aspartate 169, glycine 182, aspartate 186, and asparagine 273 each bind substrate. Aspartate 297 contributes to the Fe cation binding site.

Belongs to the KAE1 / TsaD family. Fe(2+) serves as cofactor.

It is found in the cytoplasm. The enzyme catalyses L-threonylcarbamoyladenylate + adenosine(37) in tRNA = N(6)-L-threonylcarbamoyladenosine(37) in tRNA + AMP + H(+). In terms of biological role, required for the formation of a threonylcarbamoyl group on adenosine at position 37 (t(6)A37) in tRNAs that read codons beginning with adenine. Is involved in the transfer of the threonylcarbamoyl moiety of threonylcarbamoyl-AMP (TC-AMP) to the N6 group of A37, together with TsaE and TsaB. TsaD likely plays a direct catalytic role in this reaction. This is tRNA N6-adenosine threonylcarbamoyltransferase from Ureaplasma urealyticum serovar 10 (strain ATCC 33699 / Western).